We begin with the raw amino-acid sequence, 129 residues long: Large ribosomal subunit protein eL31 (129 aa).

The disordered stretch occupies residues Met1–Glu46. 2 stretches are compositionally biased toward basic and acidic residues: residues Lys9–Lys27 and Thr35–Glu46.

The protein belongs to the eukaryotic ribosomal protein eL31 family.

This chain is Large ribosomal subunit protein eL31 (rpl31e), found in Sulfolobus acidocaldarius (strain ATCC 33909 / DSM 639 / JCM 8929 / NBRC 15157 / NCIMB 11770).